The chain runs to 145 residues: Probable inactive ribonuclease-like protein 12 (145 aa).

The signal sequence occupies residues methionine 1–threonine 19. The N-linked (GlcNAc...) asparagine glycan is linked to asparagine 88.

Belongs to the pancreatic ribonuclease family.

It is found in the secreted. Does not exhibit any ribonuclease activity. This Rattus norvegicus (Rat) protein is Probable inactive ribonuclease-like protein 12 (Rnase12).